A 208-amino-acid polypeptide reads, in one-letter code: Protein-L-isoaspartate O-methyltransferase (208 aa).

Ser-59 is an active-site residue.

This sequence belongs to the methyltransferase superfamily. L-isoaspartyl/D-aspartyl protein methyltransferase family.

The protein localises to the cytoplasm. It carries out the reaction [protein]-L-isoaspartate + S-adenosyl-L-methionine = [protein]-L-isoaspartate alpha-methyl ester + S-adenosyl-L-homocysteine. Functionally, catalyzes the methyl esterification of L-isoaspartyl residues in peptides and proteins that result from spontaneous decomposition of normal L-aspartyl and L-asparaginyl residues. It plays a role in the repair and/or degradation of damaged proteins. This Cronobacter sakazakii (strain ATCC BAA-894) (Enterobacter sakazakii) protein is Protein-L-isoaspartate O-methyltransferase.